A 368-amino-acid polypeptide reads, in one-letter code: F-box only protein 28 (368 aa).

A compositionally biased stretch (basic and acidic residues) spans 1 to 11 (MAAASEERMAE). Residues 1–57 (MAAASEERMAEEGGGGHGDGGSPSAIASTQRLPPPPPPQPPQPGSQAPPAPALAPDQ) are disordered. Gly residues predominate over residues 12-21 (EGGGGHGDGG). A compositionally biased stretch (pro residues) spans 32 to 52 (LPPPPPPQPPQPGSQAPPAPA). Residues 61–109 (NNTLVALPIVAIENILSFMSYDEISQLRLVCKRMDLVCQRMLNQGFLKV) enclose the F-box domain. Residues S235 and S242 each carry the phosphoserine modification. The residue at position 270 (T270) is a Phosphothreonine. Residues 328-368 (MESAVGNSSGSGQSEESPRKRKKAAEAIDSLRKSKRLRNRK) are disordered. Position 344 is a phosphoserine (S344).

As to quaternary structure, part of a SCF (SKP1-cullin-F-box) protein ligase complex.

The protein resides in the chromosome. The protein localises to the centromere. It localises to the kinetochore. Probably recognizes and binds to some phosphorylated proteins and promotes their ubiquitination and degradation. In Bos taurus (Bovine), this protein is F-box only protein 28 (FBXO28).